Reading from the N-terminus, the 30-residue chain is Unknown protein from spot 365 of 2D-PAGE of etiolated coleoptile (30 aa).

It belongs to the zinc-containing alcohol dehydrogenase family.

This is Unknown protein from spot 365 of 2D-PAGE of etiolated coleoptile from Zea mays (Maize).